The following is a 173-amino-acid chain: C-phycocyanin beta subunit (173 aa).

N73 carries the N4-methylasparagine modification. Residues C83 and C154 each coordinate (2R,3E)-phycocyanobilin.

It belongs to the phycobiliprotein family. In terms of assembly, heterodimer of an alpha and a beta subunit. Part of 2 PBS rod complexes, the conventional PBS rod and a photosystem I-specific CpcL-PBS rod. Contains two covalently linked bilin chromophores.

It localises to the cellular thylakoid membrane. Functionally, light-harvesting photosynthetic bile pigment-protein from the phycobiliprotein complex (phycobilisome, PBS). Phycocyanin is the major phycobiliprotein in the PBS rod. The sequence is that of C-phycocyanin beta subunit (cpcB) from Nostoc sp. (strain PCC 7120 / SAG 25.82 / UTEX 2576).